The sequence spans 63 residues: 2-hydroxymuconate tautomerase (63 aa).

The active-site Proton acceptor; via imino nitrogen is P2.

The protein belongs to the 4-oxalocrotonate tautomerase family. Homohexamer.

The enzyme catalyses (2Z,4E)-2-hydroxyhexa-2,4-dienedioate = (3E)-2-oxohex-3-enedioate. It functions in the pathway xenobiotic degradation; toluene degradation. It participates in xenobiotic degradation; xylene degradation. Catalyzes the ketonization of 2-hydroxymuconate stereoselectively to yield 2-oxo-3-hexenedioate. The polypeptide is 2-hydroxymuconate tautomerase (xylH) (Pseudomonas putida (Arthrobacter siderocapsulatus)).